The chain runs to 325 residues: DNA-directed RNA polymerase subunit alpha (325 aa).

An alpha N-terminal domain (alpha-NTD) region spans residues 1-231 (MQNSLLKPRI…DQLNVFAALE (231 aa)). The tract at residues 246 to 325 (VDPILLRPVD…ENWPPAGLEK (80 aa)) is alpha C-terminal domain (alpha-CTD).

It belongs to the RNA polymerase alpha chain family. As to quaternary structure, homodimer. The RNAP catalytic core consists of 2 alpha, 1 beta, 1 beta' and 1 omega subunit. When a sigma factor is associated with the core the holoenzyme is formed, which can initiate transcription.

It carries out the reaction RNA(n) + a ribonucleoside 5'-triphosphate = RNA(n+1) + diphosphate. Its function is as follows. DNA-dependent RNA polymerase catalyzes the transcription of DNA into RNA using the four ribonucleoside triphosphates as substrates. The chain is DNA-directed RNA polymerase subunit alpha from Herminiimonas arsenicoxydans.